A 538-amino-acid polypeptide reads, in one-letter code: Chaperonin GroEL (538 aa).

ATP is bound by residues 30 to 33 (TLGP), 87 to 91 (DGTTT), G415, 479 to 481 (DAA), and D495.

Belongs to the chaperonin (HSP60) family. As to quaternary structure, forms a cylinder of 14 subunits composed of two heptameric rings stacked back-to-back. Interacts with the co-chaperonin GroES.

Its subcellular location is the cytoplasm. It catalyses the reaction ATP + H2O + a folded polypeptide = ADP + phosphate + an unfolded polypeptide.. Its function is as follows. Together with its co-chaperonin GroES, plays an essential role in assisting protein folding. The GroEL-GroES system forms a nano-cage that allows encapsulation of the non-native substrate proteins and provides a physical environment optimized to promote and accelerate protein folding. In Dictyoglomus thermophilum (strain ATCC 35947 / DSM 3960 / H-6-12), this protein is Chaperonin GroEL.